The chain runs to 308 residues: Cyclopropane mycolic acid synthase 2 (308 aa).

Residues 44 to 45, 79 to 87, 105 to 110, and 137 to 138 each bind S-adenosyl-L-methionine; these read YS, LLDIGCGWG, TLSANQ, and WE. Cysteine 290 is an active-site residue.

It belongs to the CFA/CMAS family. As to quaternary structure, homodimer.

It localises to the cytoplasm. The enzyme catalyses a 1-acyl-2-(9Z)-enoyl-sn-glycero-3-phospholipid + S-adenosyl-L-methionine = a 1-acyl-2-(9-cyclopronane)-acyl-sn-glycero-3-phospholipid + S-adenosyl-L-homocysteine + H(+). It participates in lipid metabolism; mycolic acid biosynthesis. Catalyzes the formation of trans cyclopropanated ketomycolate or methoxymycolate through the conversion of a double bond to a cyclopropane ring at the proximal position of an oxygenated mycolic acid via the transfer of a methylene group from S-adenosyl-L-methionine. In the absence of MmaA2, CmaA2 has a non-specific cis-cyclopropanating activity and is able to catalyze the conversion of a double bond to a cis cyclopropane ring at the distal position of an alpha mycolic acid. Cyclopropanated mycolic acids are key factors participating in cell envelope permeability, host immunomodulation and persistence. This is Cyclopropane mycolic acid synthase 2 (cmaA2) from Mycobacterium leprae (strain TN).